Reading from the N-terminus, the 131-residue chain is Riboflavin kinase (131 aa).

11-16 (GLQKAG) is a CDP binding site. 2 residues coordinate Mg(2+): Thr40 and Asn42. Residues Thr98 and Glu106 each contribute to the FMN site. 111–114 (EKLR) lines the CDP pocket.

It belongs to the archaeal riboflavin kinase family. It depends on Mg(2+) as a cofactor.

It carries out the reaction riboflavin + CTP = CDP + FMN + H(+). It functions in the pathway cofactor biosynthesis; FMN biosynthesis; FMN from riboflavin (CTP route): step 1/1. Functionally, catalyzes the CTP-dependent phosphorylation of riboflavin (vitamin B2) to form flavin mononucleotide (FMN). The protein is Riboflavin kinase of Methanosphaera stadtmanae (strain ATCC 43021 / DSM 3091 / JCM 11832 / MCB-3).